Here is a 530-residue protein sequence, read N- to C-terminus: Berberine bridge enzyme-like 4 (530 aa).

A signal peptide spans 1-19; sequence MKGTLSVLCLVLLVSVLEA. A disulfide bridge connects residues C32 and C95. Residue N52 is glycosylated (N-linked (GlcNAc...) asparagine). In terms of domain architecture, FAD-binding PCMH-type spans 73-247; the sequence is NYRKLLAIVA…LSWKINLVDV (175 aa). The 6-(S-cysteinyl)-8alpha-(pros-histidyl)-FAD (His-Cys) cross-link spans 110–172; sequence HDYEGLSYMS…QTLAFPAGVC (63 aa). N-linked (GlcNAc...) asparagine glycans are attached at residues N257, N292, N341, and N441.

This sequence belongs to the oxygen-dependent FAD-linked oxidoreductase family. FAD serves as cofactor. The FAD cofactor is bound via a bicovalent 6-S-cysteinyl, 8alpha-N1-histidyl FAD linkage.

Its subcellular location is the secreted. The protein localises to the cell wall. In terms of biological role, probable flavin-dependent oxidoreductase. This is Berberine bridge enzyme-like 4 from Arabidopsis thaliana (Mouse-ear cress).